Reading from the N-terminus, the 59-residue chain is UPF0434 protein Ping_0902 (59 aa).

It belongs to the UPF0434 family.

The polypeptide is UPF0434 protein Ping_0902 (Psychromonas ingrahamii (strain DSM 17664 / CCUG 51855 / 37)).